Consider the following 689-residue polypeptide: MNYENLLIEVGTEELPPKALRKLAESFVSNFTDELEKAELSFESAQWHAAPRRLAFTVNQLVLAQADKVVEKRGPAIAQAFDADGNPTKAAMGWARGNGISVEQAERLKTDKGEWLLHQAKVVGVETKSLINDMAQRALDKLPIPKPMRWGTSKTQFIRPVHTVTMLLGSELVEGELLGVKSARVIRGHRFMGKKSFELDHADNYLSALKEQGMVLADYEARKAIIKTDAEAAAAKIGGVADLEDDLLEEVTSLVEWPVVLTANFEEKFLDVPAEALVYTMKGDQKYFPVFDKAGQLLPHFIFVTNIESKDPQVIISGNEKVVRPRLADAEFFFETDKKQTLESRLASLETVVFQKQLGTIKQRVERISQLAGYIAASIDADSDEASRAGLLSKSDLMTNMVMEFTDLQGTMGMHYARLNGETEAVAVALAEQYKPKFSGDTVPTAPISVCVALAEKLDTLVGIFGIGQAPKGAADPFALRRAAIGVLRICLENNLPLDLVDLIAKAQELHGDNLTNDKAAEQVLEFFMGRFRAWYQDQGVSVDVILAVLARRPTAPADFDSRIKAVAHFRSLEQASALAAANKRVSNILAKVEGELATDISSELLVENAEKALAEKLNELQPQLAPLFAAANYQQALSLLADLRESVDTFFEDVMVMADDEALKNNRLALLSSLREQFLHAADISLLQ.

The protein belongs to the class-II aminoacyl-tRNA synthetase family. As to quaternary structure, tetramer of two alpha and two beta subunits.

It is found in the cytoplasm. It carries out the reaction tRNA(Gly) + glycine + ATP = glycyl-tRNA(Gly) + AMP + diphosphate. In Shewanella woodyi (strain ATCC 51908 / MS32), this protein is Glycine--tRNA ligase beta subunit.